Reading from the N-terminus, the 418-residue chain is AP-3 complex subunit mu-1 (418 aa).

The MHD domain occupies 176 to 417 (NNEAYFDVIE…ITKAGKFQVR (242 aa)).

It belongs to the adaptor complexes medium subunit family. As to quaternary structure, the AP-3 complex associates with the BLOC-1 complex.

The protein localises to the golgi apparatus. It is found in the cytoplasmic vesicle membrane. Its function is as follows. Part of the AP-3 complex, an adaptor-related complex which is not clathrin-associated. The complex is associated with the Golgi region as well as more peripheral structures. It facilitates the budding of vesicles from the Golgi membrane and may be directly involved in trafficking to lysosomes. In concert with the BLOC-1 complex, AP-3 is required to target cargos into vesicles assembled at cell bodies for delivery into neurites and nerve terminals. The sequence is that of AP-3 complex subunit mu-1 (AP3M1) from Gallus gallus (Chicken).